Reading from the N-terminus, the 1251-residue chain is Cyclic nucleotide-gated channel beta-1 (1251 aa).

Disordered regions lie at residues 1–75 (MLGW…QETK), 121–151 (ITED…EAQD), 172–252 (QPPK…TRDP), and 314–561 (EDAH…STNS). Residues 1 to 656 (MLGWVQRVLP…SIDPLTNLMY (656 aa)) lie on the Cytoplasmic side of the membrane. Acidic residues predominate over residues 23 to 50 (EEEEVEPEPEMEAEVEPEPNPEEAETES). Residues 238–247 (GSQAQTSSLP) show a composition bias toward polar residues. The segment covering 335–352 (EENKAVEKMPRELSRIEE) has biased composition (basic and acidic residues). Over residues 353 to 373 (EKEDEEEEEEEEEEEEEEEVT) the composition is skewed to acidic residues. Residues 404-423 (KLWEEVGEEAKKEAEEKAKE) show a composition bias toward basic and acidic residues. The segment covering 424-434 (EAEEVAEEEAE) has biased composition (acidic residues). Basic and acidic residues predominate over residues 435 to 446 (KEPQDWAETKEE). Positions 557–567 (ASTNSAIINDR) are calmodulin-binding CaM1. The short motif at 568 to 578 (LQELVKLFKER) is the IQ-like element. Residues 585 to 619 (KLIDPDVTSDEESPKPSPAKKAPEPAPDTKPAEAE) form a disordered region. Residues 657 to 678 (VLWLFFVVMAWNWNCWLIPVRW) form a helical membrane-spanning segment. The Extracellular segment spans residues 679 to 687 (AFPYQTPDN). The helical transmembrane segment at 688–709 (IHHWLLMDYLCDLIYFLDITVF) threads the bilayer. Topologically, residues 710-724 (QTRLQFVRGGDIITD) are cytoplasmic. The chain crosses the membrane as a helical span at residues 725–744 (KKDMRNNYLKSRRFKMDLLS). Residues 745-760 (LLPLDFLYLKVGVNPL) are Extracellular-facing. A helical transmembrane segment spans residues 761 to 773 (LRLPRCLKYMAFF). The Cytoplasmic segment spans residues 774–785 (EFNSRLESILSK). A helical membrane pass occupies residues 786–808 (AYVYRVIRTTAYLLYSLHLNSCL). The tract at residues 786-885 (AYVYRVIRTT…IGQMRDVVGA (100 aa)) is ion conduction pathway. Topologically, residues 809-831 (YYWASAYQGLGSTHWVYDGVGNS) are extracellular. The next 2 membrane-spanning stretches (helical) occupy residues 832 to 858 (YIRC…LFEI) and 859 to 884 (VFQL…DVVG). The Cytoplasmic segment spans residues 885-1251 (AATAGQTYYR…MPEEREEKAE (367 aa)). The interval 888-964 (AGQTYYRSCM…NIVSKVALFQ (77 aa)) is C-linker. The segment at 968-1084 (RQMIFDMLKR…LLRKKARRML (117 aa)) is cyclic nucleotide-binding domain. 3',5'-cyclic GMP is bound by residues Gly1029, Glu1030, Ser1032, Arg1042, and Thr1043. Arg1042 contributes to the 3',5'-cyclic AMP binding site. The calmodulin-binding CaM2 stretch occupies residues 1148–1154 (QQELVEQ). A disordered region spans residues 1151–1251 (LVEQAKSSQD…MPEEREEKAE (101 aa)). Positions 1183–1203 (PPAPRTPPEPPGSPPSSPPPA) are enriched in pro residues. Residues 1242–1251 (MPEEREEKAE) are compositionally biased toward basic and acidic residues.

The protein belongs to the cyclic nucleotide-gated cation channel (TC 1.A.1.5) family. CNGB1 subfamily. In terms of assembly, the rod cyclic nucleotide-gated channel is a heterotetramer composed of CNGA1 and CNGB1 subunits with 3:1 stoichiometry. CNGA1:CNGB1 channel binds Ca(2+)-bound CALM1 via CaM1 and CaM2 regions of the CNGB1 subunit; this interaction modulates the affinity of the channel for cNMPs in response to intracellular Ca(2+) levels. The olfactory cyclic nucleotide-gated channel is a heterotetramer composed of CNGA2, CNGA4 and CNGB1 subunits with 2:1:1 stoichiometry.

Its subcellular location is the cell membrane. The protein localises to the cell projection. It is found in the cilium membrane. It carries out the reaction Ca(2+)(in) = Ca(2+)(out). The catalysed reaction is Na(+)(in) = Na(+)(out). The enzyme catalyses K(+)(in) = K(+)(out). It catalyses the reaction NH4(+)(in) = NH4(+)(out). It carries out the reaction Rb(+)(in) = Rb(+)(out). The catalysed reaction is Li(+)(in) = Li(+)(out). The enzyme catalyses Cs(+)(in) = Cs(+)(out). Pore-forming subunit of the rod cyclic nucleotide-gated channel. Mediates rod photoresponses at dim light converting transient changes in intracellular cGMP levels into electrical signals. In the dark, cGMP levels are high and keep the channel open enabling a steady inward current carried by Na(+) and Ca(2+) ions that leads to membrane depolarization and neurotransmitter release from synaptic terminals. Upon photon absorption cGMP levels decline leading to channel closure and membrane hyperpolarization that ultimately slows neurotransmitter release and signals the presence of light, the end point of the phototransduction cascade. Pore-forming subunit of the olfactory cyclic nucleotide-gated channel. Operates in the cilia of olfactory sensory neurons where chemical stimulation of the odorant is converted to an electrical signal. Mediates odorant-induced cAMP-dependent Ca(2+) influx triggering neuron depolarization. The rise of intracellular Ca(2+) levels potentiates the olfactory response by activating Ca(2+)-dependent Cl(-) channels, but it also serves as a negative feedback signal to desensitize the channel for rapid adaptation to odorants. Conducts cGMP- and cAMP-gated ion currents, with permeability for monovalent and divalent cations. The selectivity for Ca(2+) over Na(+) increases with cGMP concentrations, whereas the selectivity among monovalent ions is independent of the cGMP levels. Functionally, high affinity rod photoreceptor phosphodiesterase (PDE6)-binding protein that modulates its catalytic properties: it is a regulator of spontaneous activation of rod PDE6, thereby serving to lower rod photoreceptor 'dark noise' and allowing these sensory cells to operate at the single photon detection limit. The sequence is that of Cyclic nucleotide-gated channel beta-1 from Homo sapiens (Human).